A 392-amino-acid polypeptide reads, in one-letter code: Small ribosomal subunit protein bS1 (392 aa).

S1 motif domains lie at 16-90, 108-173, 194-262, and 279-348; these read GDKV…LSKR, DEVI…LSRK, GDVI…LSIK, and DDVI…LSIK. The interval 361 to 380 is disordered; the sequence is ASTTQSYLEDDNDEDKPTLG.

Belongs to the bacterial ribosomal protein bS1 family.

Functionally, binds mRNA; thus facilitating recognition of the initiation point. It is needed to translate mRNA with a short Shine-Dalgarno (SD) purine-rich sequence. This chain is Small ribosomal subunit protein bS1 (rpsA), found in Staphylococcus epidermidis (strain ATCC 35984 / DSM 28319 / BCRC 17069 / CCUG 31568 / BM 3577 / RP62A).